Here is a 314-residue protein sequence, read N- to C-terminus: Homoserine O-acetyltransferase (314 aa).

The active-site Acyl-thioester intermediate is the cysteine 142. Substrate-binding residues include lysine 163 and serine 192. The active-site Proton acceptor is the histidine 235. The active site involves glutamate 237. Arginine 249 contributes to the substrate binding site.

This sequence belongs to the MetA family.

It localises to the cytoplasm. It catalyses the reaction L-homoserine + acetyl-CoA = O-acetyl-L-homoserine + CoA. It participates in amino-acid biosynthesis; L-methionine biosynthesis via de novo pathway; O-acetyl-L-homoserine from L-homoserine: step 1/1. In terms of biological role, transfers an acetyl group from acetyl-CoA to L-homoserine, forming acetyl-L-homoserine. The chain is Homoserine O-acetyltransferase from Azobacteroides pseudotrichonymphae genomovar. CFP2.